The following is a 192-amino-acid chain: Thymidylate kinase (192 aa).

An ATP-binding site is contributed by 7 to 14; the sequence is GIDCVGKS.

This sequence belongs to the thymidylate kinase family.

It catalyses the reaction dTMP + ATP = dTDP + ADP. In terms of biological role, phosphorylation of dTMP to form dTDP in both de novo and salvage pathways of dTTP synthesis. The polypeptide is Thymidylate kinase (Campylobacter jejuni subsp. jejuni serotype O:6 (strain 81116 / NCTC 11828)).